A 188-amino-acid chain; its full sequence is Transcription antitermination protein NusB (188 aa).

A disordered region spans residues 154–188; the sequence is RAANPGAVSGSDAPVAPWDDSEELPAEDEAEDSRP. Acidic residues predominate over residues 172 to 188; the sequence is DDSEELPAEDEAEDSRP.

The protein belongs to the NusB family.

In terms of biological role, involved in transcription antitermination. Required for transcription of ribosomal RNA (rRNA) genes. Binds specifically to the boxA antiterminator sequence of the ribosomal RNA (rrn) operons. The protein is Transcription antitermination protein NusB of Corynebacterium efficiens (strain DSM 44549 / YS-314 / AJ 12310 / JCM 11189 / NBRC 100395).